The chain runs to 87 residues: Phosphoribosyl-ATP pyrophosphatase (87 aa).

The protein belongs to the PRA-PH family.

The protein localises to the cytoplasm. The enzyme catalyses 1-(5-phospho-beta-D-ribosyl)-ATP + H2O = 1-(5-phospho-beta-D-ribosyl)-5'-AMP + diphosphate + H(+). The protein operates within amino-acid biosynthesis; L-histidine biosynthesis; L-histidine from 5-phospho-alpha-D-ribose 1-diphosphate: step 2/9. In Bifidobacterium longum (strain DJO10A), this protein is Phosphoribosyl-ATP pyrophosphatase.